The chain runs to 1142 residues: MNDEDKVHDISKKIEREKALINAAQAMRQQTNNEQVRSKLDTQMREGRRNLEFFEEKLRELQMRRLGHGVDNMSLGASPMSGSHRQSVDDFEGYGAPSPPPKEDVRGHSSHQSQGSGPLMPASAPYPGGPPDSNVPRARPNYTRLDLIKFDTPHLGPRIQLMLSQIQFKLNVEEQYLKGIEKMVQLYQMEGDKKSKLDAAAKRVESKQKIVLLKQALKRYEELHIDIDVDGPDDDSINLPALRKPLSGTLSIRILAVKDVDHAPLGRFARSPETFIAVKAEDIVVARTKPSRNDKWEAEFHTFPVDKTNEIEFTVYDKPAEHPVPIAMLWVRISDIVEELRRKKIEAEMTSAGWVSADRVGSRAPPPQFPMGAQSPQFAAPPTSPGSQEQNTMIPPQAPPPSQVVSQPVDGWFNLEPYGQIHLSFNFIKGARPQGMDRLGRKGAVRQRKEEVHEMYGHKFVQKQFYNIMRCALCGDFLKYSAGMQCEDCKYTCHTKCYTSVVTKCISKSNAETDPDEEKINHRIPHRFIPFSNLTANWCCHCGYMLPIGSKKNSRKCSECALTAHAQCVHLVPDFCGMSMAVANQILEGMRTQKKTHKDKASSMSERTLRPGSKTSISSGSIAQASTYSGSTAYTSIASPEATEAAKLMYSQTTPRPGGPDRTSTSSTTASAAAAAAMAPKHSSQPSQAGSIPDFGGSPGYGRPDSRDDEYSAQQQQGYGSPQQRKYNPADYANIDAYSSPQARPQQQQQQQQQTPQQVSPMYQQNPQTPISKPQPVAPSYDNQVVPSASGVPVPTKKPLPSATDPGTGMRIGLDHFNFLAVLGKGNFGKVMLAETKKSRKLYAIKVLKKEFIIENDEVESIRSEKRVFLIANRERHPFLTNLHACFQTETRVYFVMEYISGGDLMLHIQRGMFGTKRAQFYAAEVCLALKYFHENGVIYRDLKLDNILLTLDGHIKIADYGLCKEDMWYGSTTSTFCGTPEFMAPEILLDKKYGRAVDWWAFGVLIYQMLLQQSPFRGEDEDEIYDAILADEPLYPIHMPRDSVSILQKLLTREPDQRLGSGPTDAQEIMSQPFFRNINWDDIYHKRVQPPFLPQIKSATDTSNFDSEFTSVTPVLTPVQSVLSQAMQEEFRGFSYTADFE.

One can recognise an REM-1 1 domain in the interval 1–67 (MNDEDKVHDI…LRELQMRRLG (67 aa)). The tract at residues 70–139 (VDNMSLGASP…PPDSNVPRAR (70 aa)) is disordered. Positions 149–226 (KFDTPHLGPR…LKRYEELHID (78 aa)) constitute an REM-1 2 domain. One can recognise a C2 domain in the interval 231–349 (GPDDDSINLP…LRRKKIEAEM (119 aa)). The segment at 357–403 (ADRVGSRAPPPQFPMGAQSPQFAAPPTSPGSQEQNTMIPPQAPPPSQ) is disordered. The span at 385 to 394 (PGSQEQNTMI) shows a compositional bias: polar residues. 2 consecutive Phorbol-ester/DAG-type zinc fingers follow at residues 457–505 (GHKF…VTKC) and 525–576 (PHRF…PDFC). 2 disordered regions span residues 592–622 (TQKK…SGSI) and 651–807 (SQTT…TDPG). Over residues 613–622 (SKTSISSGSI) the composition is skewed to polar residues. 3 stretches are compositionally biased toward low complexity: residues 663–677 (TSTS…AAAA), 712–724 (SAQQ…SPQQ), and 741–765 (PQAR…MYQQ). One can recognise a Protein kinase domain in the interval 817–1076 (FNFLAVLGKG…AQEIMSQPFF (260 aa)). Residues 823–831 (LGKGNFGKV) and Lys-846 contribute to the ATP site. Asp-942 (proton acceptor) is an active-site residue. The 66-residue stretch at 1077 to 1142 (RNINWDDIYH…RGFSYTADFE (66 aa)) folds into the AGC-kinase C-terminal domain.

Belongs to the protein kinase superfamily. AGC Ser/Thr protein kinase family. PKC subfamily.

The catalysed reaction is L-seryl-[protein] + ATP = O-phospho-L-seryl-[protein] + ADP + H(+). It carries out the reaction L-threonyl-[protein] + ATP = O-phospho-L-threonyl-[protein] + ADP + H(+). This is Protein kinase C-like from Neurospora crassa (strain ATCC 24698 / 74-OR23-1A / CBS 708.71 / DSM 1257 / FGSC 987).